Reading from the N-terminus, the 277-residue chain is Release factor glutamine methyltransferase (277 aa).

Residues 119–123 (GTGTG), aspartate 142, and asparagine 184 each bind S-adenosyl-L-methionine. 184–187 (NPPY) is a binding site for substrate.

This sequence belongs to the protein N5-glutamine methyltransferase family. PrmC subfamily.

The enzyme catalyses L-glutaminyl-[peptide chain release factor] + S-adenosyl-L-methionine = N(5)-methyl-L-glutaminyl-[peptide chain release factor] + S-adenosyl-L-homocysteine + H(+). Methylates the class 1 translation termination release factors RF1/PrfA and RF2/PrfB on the glutamine residue of the universally conserved GGQ motif. In Enterococcus faecalis (strain ATCC 700802 / V583), this protein is Release factor glutamine methyltransferase.